We begin with the raw amino-acid sequence, 320 residues long: Glutathione synthetase (320 aa).

The ATP-grasp domain occupies 130-315 (KIFTSWFPDL…ITGMLLDYIE (186 aa)). 156 to 212 (WEKYQDIIIKPLDAMGGANIFRIKKNDPNFSVIVENMTNYERKYCMVQNYLPEIKLG) provides a ligand contact to ATP. Mg(2+) contacts are provided by E286 and N288.

Belongs to the prokaryotic GSH synthase family. Mg(2+) is required as a cofactor. The cofactor is Mn(2+).

The catalysed reaction is gamma-L-glutamyl-L-cysteine + glycine + ATP = glutathione + ADP + phosphate + H(+). The protein operates within sulfur metabolism; glutathione biosynthesis; glutathione from L-cysteine and L-glutamate: step 2/2. This is Glutathione synthetase from Buchnera aphidicola subsp. Acyrthosiphon pisum (strain APS) (Acyrthosiphon pisum symbiotic bacterium).